Reading from the N-terminus, the 335-residue chain is Large ribosomal subunit protein uL10 (335 aa).

A disordered region spans residues 304–335 (GAAAPVEEAPVEEKKEEKKEEAAAPAGLGMLF). Basic and acidic residues predominate over residues 314–325 (VEEKKEEKKEEA).

This sequence belongs to the universal ribosomal protein uL10 family. As to quaternary structure, part of the 50S ribosomal subunit. Homodimer, it forms part of the ribosomal stalk which helps the ribosome interact with GTP-bound translation factors. Forms both a pentameric L10(L12)2(L12)2 and heptameric L10(L12)2(L12)2(L12)2 complex, where L10 forms an elongated spine to which the L12 dimers bind in a sequential fashion. The proportion of heptameric complexes increases during cell growth.

Its function is as follows. Forms part of the ribosomal stalk, playing a central role in the interaction of the ribosome with GTP-bound translation factors. The protein is Large ribosomal subunit protein uL10 of Methanococcus maripaludis (strain DSM 14266 / JCM 13030 / NBRC 101832 / S2 / LL).